A 333-amino-acid polypeptide reads, in one-letter code: MSSAPPGPAAPRLCCMEKGPDGYGFHLHGEKGKPGQYIRLVEAGSPAERSGLRAGDRLLEVDGTNVERESHQQVVERIRAAAGAVRLLVVQPQPEEQPPKTHSDPDGEAQREPPAAETPAAERSGPEERELRPRLCRIKKGPNGYGFNLHSEKSRPGQYVRAVDPDSPAEAAGLRAQDRIVEVNGTSVEGKQHADVVAAIKAGGDETKLLVVGVLADEFFKKCRVVPSEAHLAGPLPEPMANGDVEKENGGEPRLNSVSERPPSPALATSPEGSETHSEPDTQEGDKRSSAPSSLLDLDIPLAVAKERAHQKRTSKRAPQMDWSKKNELFSNL.

In terms of domain architecture, PDZ 1 spans 13–93; it reads LCCMEKGPDG…AVRLLVVQPQ (81 aa). Disordered regions lie at residues 90 to 164 and 232 to 333; these read VQPQ…RAVD and LAGP…FSNL. A compositionally biased stretch (basic and acidic residues) spans 97–111; it reads QPPKTHSDPDGEAQR. Residues 112–122 show a composition bias toward low complexity; the sequence is EPPAAETPAAE. A compositionally biased stretch (basic and acidic residues) spans 124-133; sequence SGPEERELRP. The region spanning 135 to 215 is the PDZ 2 domain; that stretch reads LCRIKKGPNG…ETKLLVVGVL (81 aa). Basic and acidic residues-rich tracts occupy residues 274 to 289 and 323 to 333; these read SETH…DKRS and WSKKNELFSNL.

Its subcellular location is the endomembrane system. It is found in the cell projection. The protein resides in the filopodium. The protein localises to the ruffle. It localises to the microvillus. Scaffold protein that connects plasma membrane proteins with members of the ezrin/moesin/radixin family and thereby helps to link them to the actin cytoskeleton and to regulate their surface expression. Was first known to play a role in the regulation of the activity and subcellular location of SLC9A3. May enhance Wnt signaling. This is Na(+)/H(+) exchange regulatory cofactor NHE-RF1 (NHERF1) from Gallus gallus (Chicken).